Here is a 78-residue protein sequence, read N- to C-terminus: Small ribosomal subunit protein bS18B (78 aa).

The disordered stretch occupies residues 1–22 (MPRKPVRKVASTPRPNPLDQNG).

This sequence belongs to the bacterial ribosomal protein bS18 family. In terms of assembly, part of the 30S ribosomal subunit. Forms a tight heterodimer with protein bS6.

In terms of biological role, binds as a heterodimer with protein bS6 to the central domain of the 16S rRNA, where it helps stabilize the platform of the 30S subunit. The sequence is that of Small ribosomal subunit protein bS18B from Streptomyces avermitilis (strain ATCC 31267 / DSM 46492 / JCM 5070 / NBRC 14893 / NCIMB 12804 / NRRL 8165 / MA-4680).